We begin with the raw amino-acid sequence, 312 residues long: Methionyl-tRNA formyltransferase (312 aa).

109–112 provides a ligand contact to (6S)-5,6,7,8-tetrahydrofolate; it reads SILP.

This sequence belongs to the Fmt family.

The enzyme catalyses L-methionyl-tRNA(fMet) + (6R)-10-formyltetrahydrofolate = N-formyl-L-methionyl-tRNA(fMet) + (6S)-5,6,7,8-tetrahydrofolate + H(+). Functionally, attaches a formyl group to the free amino group of methionyl-tRNA(fMet). The formyl group appears to play a dual role in the initiator identity of N-formylmethionyl-tRNA by promoting its recognition by IF2 and preventing the misappropriation of this tRNA by the elongation apparatus. The protein is Methionyl-tRNA formyltransferase of Dictyoglomus thermophilum (strain ATCC 35947 / DSM 3960 / H-6-12).